Here is a 209-residue protein sequence, read N- to C-terminus: Probable GTP-binding protein EngB (209 aa).

Positions 12–203 (INLEIIFAGR…RDRLHEMKRD (192 aa)) constitute an EngB-type G domain. Residues 20–27 (GRSNVGKS), 45–49 (GVTLR), 62–65 (DMPG), 142–145 (NKMD), and 179–181 (ISA) contribute to the GTP site. Serine 27 and threonine 47 together coordinate Mg(2+).

Belongs to the TRAFAC class TrmE-Era-EngA-EngB-Septin-like GTPase superfamily. EngB GTPase family. Mg(2+) serves as cofactor.

Necessary for normal cell division and for the maintenance of normal septation. The chain is Probable GTP-binding protein EngB from Methanosarcina mazei (strain ATCC BAA-159 / DSM 3647 / Goe1 / Go1 / JCM 11833 / OCM 88) (Methanosarcina frisia).